A 129-amino-acid chain; its full sequence is Cytochrome b5 (129 aa).

A Cytochrome b5 heme-binding domain is found at 8-84; that stretch reads TTIYTHEEVA…LEKLYIGNLK (77 aa). Histidine 43 and histidine 67 together coordinate heme. The chain crosses the membrane as a helical span at residues 104–124; sequence GINFPLIAVGVFLAAFGVYYY.

This sequence belongs to the cytochrome b5 family.

The protein resides in the endoplasmic reticulum membrane. The protein localises to the microsome membrane. Its function is as follows. Membrane bound hemoprotein which function as an electron carrier for several membrane bound oxygenases. The sequence is that of Cytochrome b5 (Cytb5) from Candida tropicalis (Yeast).